The chain runs to 73 residues: uncharacterized protein (73 aa).

It belongs to the asfivirus I73R family.

It is found in the virion. This is an uncharacterized protein from Ornithodoros (relapsing fever ticks).